The chain runs to 864 residues: MLGKLINKFFLSRNERILKNLNDLVIKINILEKDLLKLSDKELKKKTNEFKLRLKYGDSLDSLLPEAFSVIREASKRIFGMRHFDVQILGGIILHKQCIAEMRTGEGKTLTATLPAYLNALTGKGVHIVTMNDYLAQRDANKNRILFEFLGLTVGINVSGMSRLDKKNAYLADITYGTNHEYGFDYLRDNMVFNSEKKVQRKLYFALIDEVDSILIDEARTPLVISGPIENSNILYDRINSLVSDLIPQNKKYDNSFNEIGDFCIDYKQRQVNLTEMGLKKIEKLLVKYKFISKEESLYLSKNIFFIHHILLALKAHYLFLKNVDYIIKDDQIIIVDEHTGRIMSSRRWSDGLHQAIEAKENVFIQNDNQTLATMTLQNYFRLYKKLSGMTGTASTEAFEFNSIYNLDTVIIPTNKPMIRNDLPDLVFVSKSDKMNAIISDIKNCVFRQQPVLVGTVSIEKSEKISRLLNKLNIKHNVLNAKFHSQEADIIAKAGEPNAVTIATNMAGRGTDIVLGGILKKENNEKFFTTKNSVKLLNIWKKKNRLVIKSGGLHIIGTERHESRRIDNQLRGRSGRQGDPGSSRFYLSLEDTLMKFFASENVIKIIKTLGLKSNQSIEHPWLNSAIERAQKKVENCNFDIRKQLLEYDNVINEQRSVIYNERNKLINKLDIHDHILFILKDRINFCIKQYISGNSMNVDSFFALEKELKNNFYFIKSINKFLEHDTTLYENVDKLIDLIVTTIQFSYNKNTAIVSKKYSNMIEKSVMLQILDIFWIEHLNAVDFLKQSIHLRGYAQQDPQQEYKRESFFMFQSMLEAIKNNVIKSLINIFFVDFKKNKNIYINFIDQKDYDSFHFLIMKSINIT.

Residues Q87, 105–109 (GEGKT), and D512 contribute to the ATP site.

This sequence belongs to the SecA family. In terms of assembly, monomer and homodimer. Part of the essential Sec protein translocation apparatus which comprises SecA, SecYEG and auxiliary proteins SecDF-YajC and YidC.

Its subcellular location is the cell inner membrane. It is found in the cytoplasm. The enzyme catalyses ATP + H2O + cellular proteinSide 1 = ADP + phosphate + cellular proteinSide 2.. In terms of biological role, part of the Sec protein translocase complex. Interacts with the SecYEG preprotein conducting channel. Has a central role in coupling the hydrolysis of ATP to the transfer of proteins into and across the cell membrane, serving as an ATP-driven molecular motor driving the stepwise translocation of polypeptide chains across the membrane. This is Protein translocase subunit SecA from Buchnera aphidicola subsp. Cinara cedri (strain Cc).